Here is a 112-residue protein sequence, read N- to C-terminus: Cytochrome c6 (112 aa).

The first 25 residues, 1–25 (MKTLLTILALTLVTLTTWLSTPAFA), serve as a signal peptide directing secretion. Heme c is bound by residues Cys-39, Cys-42, His-43, and Met-83.

The protein belongs to the cytochrome c family. PetJ subfamily. Monomer. Binds 1 heme c group covalently per subunit.

It is found in the cellular thylakoid lumen. In terms of biological role, functions as an electron carrier between membrane-bound cytochrome b6-f and photosystem I in oxygenic photosynthesis. This is Cytochrome c6 from Synechococcus sp. (strain ATCC 27167 / PCC 6312).